The following is a 559-amino-acid chain: Oxygen-dependent choline dehydrogenase (559 aa).

4-33 (DYIIIGAGSAGNVLATRLTEESDVSVLLLE) lines the FAD pocket. Residues 182–201 (EGFGPMDRTVTPKGRRASTA) are disordered. H471 serves as the catalytic Proton acceptor.

The protein belongs to the GMC oxidoreductase family. The cofactor is FAD.

The catalysed reaction is choline + A = betaine aldehyde + AH2. The enzyme catalyses betaine aldehyde + NAD(+) + H2O = glycine betaine + NADH + 2 H(+). Its pathway is amine and polyamine biosynthesis; betaine biosynthesis via choline pathway; betaine aldehyde from choline (cytochrome c reductase route): step 1/1. In terms of biological role, involved in the biosynthesis of the osmoprotectant glycine betaine. Catalyzes the oxidation of choline to betaine aldehyde and betaine aldehyde to glycine betaine at the same rate. The protein is Oxygen-dependent choline dehydrogenase of Pectobacterium carotovorum subsp. carotovorum (strain PC1).